A 427-amino-acid chain; its full sequence is 5-hydroxybenzimidazole synthase BzaA (427 aa).

This sequence belongs to the ThiC family. 5-hydroxybenzimidazole synthase subfamily. The cofactor is [4Fe-4S] cluster.

The enzyme catalyses 5-amino-1-(5-phospho-beta-D-ribosyl)imidazole + AH2 + S-adenosyl-L-methionine = 5-hydroxybenzimidazole + 5'-deoxyadenosine + formate + L-methionine + A + NH4(+) + phosphate + 2 H(+). Its pathway is cofactor biosynthesis; adenosylcobalamin biosynthesis. In terms of biological role, together with BzaB, catalyzes the conversion of aminoimidazole ribotide (AIR) to 5-hydroxybenzimidazole (5-HBI) in a radical S-adenosyl-L-methionine (SAM)-dependent reaction. Is thus involved in the anaerobic biosynthesis of dimethylbenzimidazole (DMB), the lower axial ligand of vitamin B12 (cobalamin). Requires BzaB for catalytic activity, as BzaA alone displays no activity. This chain is 5-hydroxybenzimidazole synthase BzaA, found in Eubacterium limosum.